The chain runs to 678 residues: Glycine--tRNA ligase beta subunit (678 aa).

It belongs to the class-II aminoacyl-tRNA synthetase family. As to quaternary structure, tetramer of two alpha and two beta subunits.

The protein resides in the cytoplasm. The catalysed reaction is tRNA(Gly) + glycine + ATP = glycyl-tRNA(Gly) + AMP + diphosphate. The polypeptide is Glycine--tRNA ligase beta subunit (Sulfurihydrogenibium sp. (strain YO3AOP1)).